Consider the following 430-residue polypeptide: Enolase (430 aa).

Glutamine 165 is a binding site for (2R)-2-phosphoglycerate. Catalysis depends on glutamate 207, which acts as the Proton donor. Mg(2+) is bound by residues aspartate 244, glutamate 287, and aspartate 314. The (2R)-2-phosphoglycerate site is built by lysine 339, arginine 368, serine 369, and lysine 390. The active-site Proton acceptor is the lysine 339.

Belongs to the enolase family. As to quaternary structure, component of the RNA degradosome, a multiprotein complex involved in RNA processing and mRNA degradation. Mg(2+) serves as cofactor.

It localises to the cytoplasm. It is found in the secreted. The protein resides in the cell surface. The enzyme catalyses (2R)-2-phosphoglycerate = phosphoenolpyruvate + H2O. It functions in the pathway carbohydrate degradation; glycolysis; pyruvate from D-glyceraldehyde 3-phosphate: step 4/5. Functionally, catalyzes the reversible conversion of 2-phosphoglycerate (2-PG) into phosphoenolpyruvate (PEP). It is essential for the degradation of carbohydrates via glycolysis. The protein is Enolase of Xylella fastidiosa (strain M23).